The sequence spans 81 residues: MKPGIHPDYKKVVFMDTSTGFKFLSGSTKTSNETIEWEDGNTYPLIKVEISSDSHPFYTGKQKLADAGGRVDRFKKKYNLK.

The protein belongs to the bacterial ribosomal protein bL31 family. Type B subfamily. As to quaternary structure, part of the 50S ribosomal subunit.

The protein is Large ribosomal subunit protein bL31B of Halalkalibacterium halodurans (strain ATCC BAA-125 / DSM 18197 / FERM 7344 / JCM 9153 / C-125) (Bacillus halodurans).